A 184-amino-acid chain; its full sequence is Photosystem I assembly protein Ycf4 (184 aa).

The next 2 helical transmembrane spans lie at 19–39 and 57–77; these read ISNF…LLVG and IVFF…LFIS.

The protein belongs to the Ycf4 family.

The protein localises to the plastid. It localises to the chloroplast thylakoid membrane. Its function is as follows. Seems to be required for the assembly of the photosystem I complex. This chain is Photosystem I assembly protein Ycf4, found in Nymphaea alba (White water-lily).